The primary structure comprises 1005 residues: Retinoblastoma-related protein (1005 aa).

A domain A region spans residues 404-605; sequence TPVSTAMTTA…EKGSSMYNSL (202 aa). Residues 404-853 are pocket; that stretch reads TPVSTAMTTA…NEIFIPSVKP (450 aa). Positions 606–722 are spacer; the sequence is TIARPNLSNE…HPTRGETCAE (117 aa). Positions 723–853 are domain B; that stretch reads TAVNLFFSKI…NEIFIPSVKP (131 aa). Positions 863 to 873 are enriched in polar residues; it reads VPKNPNNQVSE. The interval 863–899 is disordered; the sequence is VPKNPNNQVSETNKKDESGPCPCPGSPKVSSFPSLPD.

This sequence belongs to the retinoblastoma protein (RB) family.

The protein resides in the nucleus. Functionally, regulator of biological processes that recruits a histone deacetylase to control gene transcription. May play a role in the entry into mitosis, negatively regulating the cell proliferation. Formation of stable complexes with geminiviridae replication-associated proteins may create a cellular environment which favors viral DNA replication. This Pilosella piloselloides (Glaucous king-devil hawkweed) protein is Retinoblastoma-related protein (RBR).